A 276-amino-acid chain; its full sequence is MKKWLICSFVLVLLVSFTACSPSAEHESIKIGIAESDGAIWNYIAQKAEEAGLDIQLIPFSDYAESDIALANKEIDANAFQTISYFQSFTEKYKLNLAPLGTTYITPMGIYSKRYERIRDISRGAVVSVPDKAFDFGRALTVLQEAGLLTLKNGFNGTGSVDMIKDNPRHLKLKAVRQQDAVSGADVFVMKPSEAKKAGLNPKKHTLKSGGLMSEEEMNLIVVRAEDQDREALQTILELYQADDTAAFIEKEYQGDLVPAFLPLKRLSDWKNEFEH.

The first 19 residues, 1–19 (MKKWLICSFVLVLLVSFTA), serve as a signal peptide directing secretion. A lipid anchor (N-palmitoyl cysteine) is attached at Cys20. Cys20 carries the S-diacylglycerol cysteine lipid modification.

Belongs to the NlpA lipoprotein family.

The protein resides in the cell membrane. This is an uncharacterized protein from Bacillus subtilis (strain 168).